The chain runs to 843 residues: Protein P (843 aa).

Residues methionine 1–glutamine 177 are terminal protein domain (TP). Residues aspartate 178–isoleucine 346 are spacer. The tract at residues glutamine 220–threonine 265 is disordered. Positions leucine 223–arginine 235 are enriched in low complexity. Residues glutamate 347 to glutamine 690 form a polymerase/reverse transcriptase domain (RT) region. Residues glutamate 357 to isoleucine 600 enclose the Reverse transcriptase domain. 3 residues coordinate Mg(2+): aspartate 429, aspartate 551, and aspartate 552.

Belongs to the hepadnaviridae P protein family.

The catalysed reaction is DNA(n) + a 2'-deoxyribonucleoside 5'-triphosphate = DNA(n+1) + diphosphate. It catalyses the reaction Endonucleolytic cleavage to 5'-phosphomonoester.. Activated by host HSP70 and HSP40 in vitro to be able to bind the epsilon loop of the pgRNA. Because deletion of the RNase H region renders the protein partly chaperone-independent, the chaperones may be needed indirectly to relieve occlusion of the RNA-binding site by this domain. Inhibited by several reverse-transcriptase inhibitors: Lamivudine, Adefovir and Entecavir. Functionally, multifunctional enzyme that converts the viral RNA genome into dsDNA in viral cytoplasmic capsids. This enzyme displays a DNA polymerase activity that can copy either DNA or RNA templates, and a ribonuclease H (RNase H) activity that cleaves the RNA strand of RNA-DNA heteroduplexes in a partially processive 3'- to 5'-endonucleasic mode. Neo-synthesized pregenomic RNA (pgRNA) are encapsidated together with the P protein, and reverse-transcribed inside the nucleocapsid. Initiation of reverse-transcription occurs first by binding the epsilon loop on the pgRNA genome, and is initiated by protein priming, thereby the 5'-end of (-)DNA is covalently linked to P protein. Partial (+)DNA is synthesized from the (-)DNA template and generates the relaxed circular DNA (RC-DNA) genome. After budding and infection, the RC-DNA migrates in the nucleus, and is converted into a plasmid-like covalently closed circular DNA (cccDNA). The activity of P protein does not seem to be necessary for cccDNA generation, and is presumably released from (+)DNA by host nuclear DNA repair machinery. The protein is Protein P of Hepatitis B virus genotype B2 (isolate Vietnam/9873/1997) (HBV-B).